A 125-amino-acid chain; its full sequence is MARIASVNIPDNKRLVVSLTYIYGLGTTMAKTICKKAKILEDKKVKDLTDQELISLRNIIENEYKVEGDLRREVTLNIKKKKDIRSYQGLRHIRKLPVRGQNTHSNARTRKGKAVAIAGKKKAVK.

Belongs to the universal ribosomal protein uS13 family. In terms of assembly, part of the 30S ribosomal subunit. Forms a loose heterodimer with protein S19. Forms two bridges to the 50S subunit in the 70S ribosome.

In terms of biological role, located at the top of the head of the 30S subunit, it contacts several helices of the 16S rRNA. In the 70S ribosome it contacts the 23S rRNA (bridge B1a) and protein L5 of the 50S subunit (bridge B1b), connecting the 2 subunits; these bridges are implicated in subunit movement. Contacts the tRNAs in the A and P-sites. This Rickettsia bellii (strain OSU 85-389) protein is Small ribosomal subunit protein uS13.